A 477-amino-acid polypeptide reads, in one-letter code: Cysteine--tRNA ligase (477 aa).

Cys-42 contributes to the Zn(2+) binding site. A 'HIGH' region motif is present at residues Ala-44–His-54. Zn(2+) is bound by residues Cys-220, His-245, and Glu-249. The 'KMSKS' region signature appears at Lys-276–Ser-280. Lys-279 lines the ATP pocket.

Belongs to the class-I aminoacyl-tRNA synthetase family. As to quaternary structure, monomer. It depends on Zn(2+) as a cofactor.

Its subcellular location is the cytoplasm. The catalysed reaction is tRNA(Cys) + L-cysteine + ATP = L-cysteinyl-tRNA(Cys) + AMP + diphosphate. The polypeptide is Cysteine--tRNA ligase (Mycolicibacterium smegmatis (strain ATCC 700084 / mc(2)155) (Mycobacterium smegmatis)).